Here is a 281-residue protein sequence, read N- to C-terminus: Probable endonuclease 4 (281 aa).

Zn(2+) is bound by residues H68, H108, E145, D179, H182, H216, D229, H231, and E261.

Belongs to the AP endonuclease 2 family. The cofactor is Zn(2+).

The enzyme catalyses Endonucleolytic cleavage to 5'-phosphooligonucleotide end-products.. Functionally, endonuclease IV plays a role in DNA repair. It cleaves phosphodiester bonds at apurinic or apyrimidinic (AP) sites, generating a 3'-hydroxyl group and a 5'-terminal sugar phosphate. This is Probable endonuclease 4 from Trichlorobacter lovleyi (strain ATCC BAA-1151 / DSM 17278 / SZ) (Geobacter lovleyi).